The primary structure comprises 155 residues: RNA pyrophosphohydrolase (155 aa).

Positions 5–149 constitute a Nudix hydrolase domain; it reads EYRSGVGIML…KKPLYEKILS (145 aa). The short motif at 39-60 is the Nudix box element; that stretch reads GGLEAKETPEVGVLRELEEETG.

This sequence belongs to the Nudix hydrolase family. RppH subfamily. A divalent metal cation is required as a cofactor.

Accelerates the degradation of transcripts by removing pyrophosphate from the 5'-end of triphosphorylated RNA, leading to a more labile monophosphorylated state that can stimulate subsequent ribonuclease cleavage. This chain is RNA pyrophosphohydrolase, found in Zymomonas mobilis subsp. mobilis (strain ATCC 31821 / ZM4 / CP4).